We begin with the raw amino-acid sequence, 226 residues long: Phosphatidylserine decarboxylase proenzyme (226 aa).

The Schiff-base intermediate with substrate; via pyruvic acid role is filled by Ser-184. Position 184 is a pyruvic acid (Ser); by autocatalysis (Ser-184).

The protein belongs to the phosphatidylserine decarboxylase family. PSD-A subfamily. In terms of assembly, heterodimer of a large membrane-associated beta subunit and a small pyruvoyl-containing alpha subunit. Requires pyruvate as cofactor. In terms of processing, is synthesized initially as an inactive proenzyme. Formation of the active enzyme involves a self-maturation process in which the active site pyruvoyl group is generated from an internal serine residue via an autocatalytic post-translational modification. Two non-identical subunits are generated from the proenzyme in this reaction, and the pyruvate is formed at the N-terminus of the alpha chain, which is derived from the carboxyl end of the proenzyme. The post-translation cleavage follows an unusual pathway, termed non-hydrolytic serinolysis, in which the side chain hydroxyl group of the serine supplies its oxygen atom to form the C-terminus of the beta chain, while the remainder of the serine residue undergoes an oxidative deamination to produce ammonia and the pyruvoyl prosthetic group on the alpha chain.

The protein localises to the cell membrane. It catalyses the reaction a 1,2-diacyl-sn-glycero-3-phospho-L-serine + H(+) = a 1,2-diacyl-sn-glycero-3-phosphoethanolamine + CO2. It functions in the pathway phospholipid metabolism; phosphatidylethanolamine biosynthesis; phosphatidylethanolamine from CDP-diacylglycerol: step 2/2. Catalyzes the formation of phosphatidylethanolamine (PtdEtn) from phosphatidylserine (PtdSer). The protein is Phosphatidylserine decarboxylase proenzyme of Ehrlichia canis (strain Jake).